Here is a 144-residue protein sequence, read N- to C-terminus: MTEQKHEKKISPRRRARECAVQALYSWYVSQNSPAEIELNFMAEQDLKGVDTAYFRRLFRQTAENVDAVDNIMIPYLDREVSELDPIEKAILRLAVYELKFELDVPYKVVINEAIEVAKVFGAEDSHKYVNGVLDKVAPVLSRK.

It belongs to the NusB family.

Its function is as follows. Involved in transcription antitermination. Required for transcription of ribosomal RNA (rRNA) genes. Binds specifically to the boxA antiterminator sequence of the ribosomal RNA (rrn) operons. In Pasteurella multocida (strain Pm70), this protein is Transcription antitermination protein NusB.